Consider the following 477-residue polypeptide: Cysteine protease ATG4b (477 aa).

The tract at residues 11–39 (SKCSSSSTSEKRDISSPTSLVSDSASSDN) is disordered. Residues 25–39 (SSPTSLVSDSASSDN) show a composition bias toward polar residues. The Nucleophile role is filled by Cys-173. Active-site residues include Asp-368 and His-370. The segment at 453-477 (AETSSSTETSTEISGEEHEDDWQLL) is disordered. Residues 454–465 (ETSSSTETSTEI) show a composition bias toward low complexity.

It belongs to the peptidase C54 family. In terms of assembly, interacts with ATG8a and ATG8d. In terms of tissue distribution, constitutively expressed.

Its subcellular location is the cytoplasm. The catalysed reaction is [protein]-C-terminal L-amino acid-glycyl-phosphatidylethanolamide + H2O = [protein]-C-terminal L-amino acid-glycine + a 1,2-diacyl-sn-glycero-3-phosphoethanolamine. Its function is as follows. Cysteine protease that plays a key role in autophagy by mediating both proteolytic activation and delipidation of ATG8 family proteins. The protease activity is required for proteolytic activation of ATG8 family proteins: cleaves the C-terminal amino acid of ATG8 proteins to reveal a C-terminal glycine. Exposure of the glycine at the C-terminus is essential for ATG8 proteins conjugation to phosphatidylethanolamine (PE) and insertion to membranes, which is necessary for autophagy. In addition to the protease activity, also mediates delipidation of PE-conjugated ATG8 proteins. This Arabidopsis thaliana (Mouse-ear cress) protein is Cysteine protease ATG4b.